The sequence spans 305 residues: N-acetylneuraminate lyase A (305 aa).

The aceneuramate site is built by threonine 51 and threonine 52. The active-site Proton donor is the tyrosine 143. Lysine 173 acts as the Schiff-base intermediate with substrate in catalysis. Aceneuramate contacts are provided by serine 175, glycine 197, aspartate 199, glutamate 200, and serine 216.

This sequence belongs to the DapA family. NanA subfamily. As to quaternary structure, homotetramer.

It localises to the cytoplasm. The enzyme catalyses aceneuramate = aldehydo-N-acetyl-D-mannosamine + pyruvate. It functions in the pathway amino-sugar metabolism; N-acetylneuraminate degradation. Functionally, catalyzes the cleavage of N-acetylneuraminic acid (sialic acid) to form pyruvate and N-acetylmannosamine via a Schiff base intermediate. It prevents sialic acids from being recycled and returning to the cell surface. Involved in the N-glycolylneuraminic acid (Neu5Gc) degradation pathway. The polypeptide is N-acetylneuraminate lyase A (npl-a) (Xenopus laevis (African clawed frog)).